Consider the following 292-residue polypeptide: MGNELFLAFTTSHLPLAEQKLARYKLRIVKPPKLPLEKKPNPDKDGPDYEPNLWMWVNPNIVYPPGKLEVSGRRKREDLTSTLPSSQPPQKEEDASCSEAAGVESLSQSSSKRSPPRKRFAFSPSTWELTEEEEAEDQEDSSSMALPSPHKRAPLQSRRLRQASSQAGRLWSRPPLNYFHLIALALRNSSPCGLNVQQIYSFTRKHFPFFRTAPEGWKNTVRHNLCFRDSFEKVPVSMQGGASTRPRSCLWKLTEEGHRRFAEEARALASTRLESIQQCMSQPDVMPFLFDL.

Disordered regions lie at residues 31–50 (PPKLPLEKKPNPDKDGPDYE) and 65–166 (PGKL…ASSQ). Composition is skewed to basic and acidic residues over residues 35–47 (PLEKKPNPDKDGP) and 70–79 (VSGRRKREDL). Residues 80 to 89 (TSTLPSSQPP) show a composition bias toward polar residues. Residues 129-140 (LTEEEEAEDQED) show a composition bias toward acidic residues. Residues 149-161 (PHKRAPLQSRRLR) are compositionally biased toward basic residues. Positions 173 to 272 (RPPLNYFHLI…EEARALASTR (100 aa)) form a DNA-binding region, fork-head.

As to expression, expressed in testis (at protein level).

The protein localises to the nucleus. Its subcellular location is the cytoplasm. It is found in the perinuclear region. Transcription factor which acts as both an activator and a repressor. Activates transcription of a number of genes including the heat shock chaperones HSPA1A and HSPA6 and the antioxidant NADPH-dependent reductase DHRS2 which are involved in protection against oxidative stress. Required for normal brain development. This is Forkhead box protein R1 (FOXR1) from Homo sapiens (Human).